We begin with the raw amino-acid sequence, 500 residues long: UPF0371 protein SZO_06760 (500 aa).

This sequence belongs to the UPF0371 family.

The sequence is that of UPF0371 protein SZO_06760 from Streptococcus equi subsp. zooepidemicus (strain H70).